The sequence spans 156 residues: uncharacterized protein (156 aa).

The first 18 residues, 1–18 (MKKLLSIFLMAFSLNAFA), serve as a signal peptide directing secretion. In terms of domain architecture, Thioredoxin spans 19–156 (QTNLADVQLK…AEQIRVFAEK (138 aa)). Cys54 and Cys57 are oxidised to a cystine.

Belongs to the thioredoxin family.

This is an uncharacterized protein from Haemophilus influenzae (strain ATCC 51907 / DSM 11121 / KW20 / Rd).